Here is a 199-residue protein sequence, read N- to C-terminus: MFISFEGTEGVGKTTLIRKIHQHFEEQGKQVVLTREPGGTPLAEQIRSMLLAVNHNENMSHDTELLLIYAARAQHLQQVILPALESNKIVLSDRFTDASFAYQCSGRGLSQDKLQLLNQNFVSSMPEVTFWLDAPIELGMNRARERGALDRFEQEKLSFFTKVREGYETLWKAEPERIKRLDATQSPDQVFEQALQYLA.

7 to 14 (GTEGVGKT) is a binding site for ATP.

This sequence belongs to the thymidylate kinase family.

It carries out the reaction dTMP + ATP = dTDP + ADP. Functionally, phosphorylation of dTMP to form dTDP in both de novo and salvage pathways of dTTP synthesis. This is Thymidylate kinase from Acinetobacter baumannii (strain AB307-0294).